We begin with the raw amino-acid sequence, 305 residues long: tRNA pseudouridine synthase B (305 aa).

The Nucleophile role is filled by Asp-39.

This sequence belongs to the pseudouridine synthase TruB family. Type 1 subfamily.

It carries out the reaction uridine(55) in tRNA = pseudouridine(55) in tRNA. Functionally, responsible for synthesis of pseudouridine from uracil-55 in the psi GC loop of transfer RNAs. The protein is tRNA pseudouridine synthase B of Staphylococcus aureus (strain Mu50 / ATCC 700699).